We begin with the raw amino-acid sequence, 399 residues long: Putative glutamate--cysteine ligase 2 (399 aa).

The tract at residues 377-399 (PAVGSSHGRTDPSRNGGPSHAGA) is disordered.

The protein belongs to the glutamate--cysteine ligase type 2 family. YbdK subfamily.

It catalyses the reaction L-cysteine + L-glutamate + ATP = gamma-L-glutamyl-L-cysteine + ADP + phosphate + H(+). Its function is as follows. ATP-dependent carboxylate-amine ligase which exhibits weak glutamate--cysteine ligase activity. In Thermobifida fusca (strain YX), this protein is Putative glutamate--cysteine ligase 2.